The primary structure comprises 123 residues: MAPPKPSAKGAKKAAKTVSKPKDGKKRKHARKESYSVYIYRVLKQVHPDTGVSSKAMSIMNSFVNDVFERIASEASRLAHYNKRSTISSREIQTAVRLILPGELAKHAVSEGTKAVTKYTSSK.

The segment at 1-31 (MAPPKPSAKGAKKAAKTVSKPKDGKKRKHAR) is disordered. A glycan (O-linked (GlcNAc) serine) is linked at serine 110. Lysine 118 participates in a covalent cross-link: Glycyl lysine isopeptide (Lys-Gly) (interchain with G-Cter in ubiquitin).

This sequence belongs to the histone H2B family. In terms of assembly, the nucleosome is a histone octamer containing two molecules each of H2A, H2B, H3 and H4 assembled in one H3-H4 heterotetramer and two H2A-H2B heterodimers. The octamer wraps approximately 147 bp of DNA. Monoubiquitination of Lys-118 gives a specific tag for epigenetic transcriptional activation and is also prerequisite for histone H3 'Lys-4' and 'Lys-79' methylation. Post-translationally, glcNAcylation at Ser-110 promotes monoubiquitination of Lys-118. It fluctuates in response to extracellular glucose, and associates with transcribed genes.

The protein localises to the nucleus. Its subcellular location is the chromosome. Its function is as follows. Core component of nucleosome. Nucleosomes wrap and compact DNA into chromatin, limiting DNA accessibility to the cellular machineries which require DNA as a template. Histones thereby play a central role in transcription regulation, DNA repair, DNA replication and chromosomal stability. DNA accessibility is regulated via a complex set of post-translational modifications of histones, also called histone code, and nucleosome remodeling. In Caenorhabditis elegans, this protein is Probable histone H2B 3 (his-41).